A 227-amino-acid chain; its full sequence is MAYPFQLGLQDATSPIMEELLHFHDHTLMIVFLISSLVLYIISLMLTTKLTHTSTMDAQEVETVWTILPAIILILIALPSLRILYMMDEINNPSLTVKTMGHQWYWSYEYTDYEDLNFDSYMIPTQELKLGELRLLEVDNRVVLPMEMTVRMLISSEDVLHSWAVPSLGLKTDAIPGRLNQTTLMAMRPGLYYGQCSEICGSNHSFMPIVLEMVPLSYFETWSAVMV.

Residues 1-14 lie on the Mitochondrial intermembrane side of the membrane; sequence MAYPFQLGLQDATS. Residues 15-45 traverse the membrane as a helical segment; sequence PIMEELLHFHDHTLMIVFLISSLVLYIISLM. Residues 46-59 lie on the Mitochondrial matrix side of the membrane; the sequence is LTTKLTHTSTMDAQ. A helical membrane pass occupies residues 60–87; it reads EVETVWTILPAIILILIALPSLRILYMM. Topologically, residues 88-227 are mitochondrial intermembrane; that stretch reads DEINNPSLTV…YFETWSAVMV (140 aa). Cu cation contacts are provided by H161, C196, E198, C200, H204, and M207. E198 serves as a coordination point for Mg(2+). Residue Y218 is modified to Phosphotyrosine.

This sequence belongs to the cytochrome c oxidase subunit 2 family. Component of the cytochrome c oxidase (complex IV, CIV), a multisubunit enzyme composed of 14 subunits. The complex is composed of a catalytic core of 3 subunits MT-CO1, MT-CO2 and MT-CO3, encoded in the mitochondrial DNA, and 11 supernumerary subunits COX4I, COX5A, COX5B, COX6A, COX6B, COX6C, COX7A, COX7B, COX7C, COX8 and NDUFA4, which are encoded in the nuclear genome. The complex exists as a monomer or a dimer and forms supercomplexes (SCs) in the inner mitochondrial membrane with NADH-ubiquinone oxidoreductase (complex I, CI) and ubiquinol-cytochrome c oxidoreductase (cytochrome b-c1 complex, complex III, CIII), resulting in different assemblies (supercomplex SCI(1)III(2)IV(1) and megacomplex MCI(2)III(2)IV(2)). Found in a complex with TMEM177, COA6, COX18, COX20, SCO1 and SCO2. Interacts with TMEM177 in a COX20-dependent manner. Interacts with COX20. Interacts with COX16. Requires Cu cation as cofactor.

The protein localises to the mitochondrion inner membrane. The enzyme catalyses 4 Fe(II)-[cytochrome c] + O2 + 8 H(+)(in) = 4 Fe(III)-[cytochrome c] + 2 H2O + 4 H(+)(out). Component of the cytochrome c oxidase, the last enzyme in the mitochondrial electron transport chain which drives oxidative phosphorylation. The respiratory chain contains 3 multisubunit complexes succinate dehydrogenase (complex II, CII), ubiquinol-cytochrome c oxidoreductase (cytochrome b-c1 complex, complex III, CIII) and cytochrome c oxidase (complex IV, CIV), that cooperate to transfer electrons derived from NADH and succinate to molecular oxygen, creating an electrochemical gradient over the inner membrane that drives transmembrane transport and the ATP synthase. Cytochrome c oxidase is the component of the respiratory chain that catalyzes the reduction of oxygen to water. Electrons originating from reduced cytochrome c in the intermembrane space (IMS) are transferred via the dinuclear copper A center (CU(A)) of subunit 2 and heme A of subunit 1 to the active site in subunit 1, a binuclear center (BNC) formed by heme A3 and copper B (CU(B)). The BNC reduces molecular oxygen to 2 water molecules using 4 electrons from cytochrome c in the IMS and 4 protons from the mitochondrial matrix. The polypeptide is Cytochrome c oxidase subunit 2 (MT-CO2) (Lycalopex culpaeus (Culpeo fox)).